The chain runs to 131 residues: MAKLSTDELLDAFKEMTLIELSEFVKQFEETFGVTAAAPVAVAAAPAAGGAAAAGGDAGAEQDEFDVILESAGDKKINVIKEVRALTSLGLKEAKELVEAAPKPILEKVAKDAAEKAKEALEGAGATVTLK.

This sequence belongs to the bacterial ribosomal protein bL12 family. In terms of assembly, homodimer. Part of the ribosomal stalk of the 50S ribosomal subunit. Forms a multimeric L10(L12)X complex, where L10 forms an elongated spine to which 2 to 4 L12 dimers bind in a sequential fashion. Binds GTP-bound translation factors.

Its function is as follows. Forms part of the ribosomal stalk which helps the ribosome interact with GTP-bound translation factors. Is thus essential for accurate translation. In Nocardioides sp. (strain ATCC BAA-499 / JS614), this protein is Large ribosomal subunit protein bL12.